A 262-amino-acid chain; its full sequence is MCGIFGYCNFLIEKTRGEIIDTLIEGLQALEYKEYDSSGISIQGDELESLNIYKQTGKISSLKEEIDLYNLNKNLPFISHCGIAHTRRATHGGLRRANCHPHNSDPSNEFVVVHNGVITNFANLKALLMAKGYVFKSDTDTECIPKLYKHIYDTSIELGYNLDFHVLTNLVLKELEGSYGLLCTSSHFPDEVVAARKGSPLVIGVKGKTDMDVNFVEVEYLDQEEDYLKLNTQTKSSGNVLAAAPVKYNTCLRKSPPFVHNT.

Cysteine 2 acts as the Nucleophile; for GATase activity in catalysis. The 261-residue stretch at 2–262 (CGIFGYCNFL…RKSPPFVHNT (261 aa)) folds into the Glutamine amidotransferase type-2 domain.

It catalyses the reaction D-fructose 6-phosphate + L-glutamine = D-glucosamine 6-phosphate + L-glutamate. Its pathway is nucleotide-sugar biosynthesis; UDP-N-acetyl-alpha-D-glucosamine biosynthesis; alpha-D-glucosamine 6-phosphate from D-fructose 6-phosphate: step 1/1. Functionally, involved in amino sugar synthesis (formation of chitin, supplies the amino sugars of asparagine-linked oligosaccharides of glycoproteins). The chain is Putative glutamine--fructose-6-phosphate aminotransferase [isomerizing] from Saccharomyces cerevisiae (strain ATCC 204508 / S288c) (Baker's yeast).